Consider the following 345-residue polypeptide: Probable dual-specificity RNA methyltransferase RlmN (345 aa).

Catalysis depends on E93, which acts as the Proton acceptor. The Radical SAM core domain occupies 99–326 (DDERATLCIS…TTIRASRGED (228 aa)). Residues C106 and C331 are joined by a disulfide bond. Residues C113, C117, and C120 each coordinate [4Fe-4S] cluster. Residues 158–159 (GE), S190, 212–214 (SLH), and H288 contribute to the S-adenosyl-L-methionine site. C331 (S-methylcysteine intermediate) is an active-site residue.

Belongs to the radical SAM superfamily. RlmN family. [4Fe-4S] cluster serves as cofactor.

Its subcellular location is the cytoplasm. The catalysed reaction is adenosine(2503) in 23S rRNA + 2 reduced [2Fe-2S]-[ferredoxin] + 2 S-adenosyl-L-methionine = 2-methyladenosine(2503) in 23S rRNA + 5'-deoxyadenosine + L-methionine + 2 oxidized [2Fe-2S]-[ferredoxin] + S-adenosyl-L-homocysteine. It carries out the reaction adenosine(37) in tRNA + 2 reduced [2Fe-2S]-[ferredoxin] + 2 S-adenosyl-L-methionine = 2-methyladenosine(37) in tRNA + 5'-deoxyadenosine + L-methionine + 2 oxidized [2Fe-2S]-[ferredoxin] + S-adenosyl-L-homocysteine. In terms of biological role, specifically methylates position 2 of adenine 2503 in 23S rRNA and position 2 of adenine 37 in tRNAs. This Bacteroides thetaiotaomicron (strain ATCC 29148 / DSM 2079 / JCM 5827 / CCUG 10774 / NCTC 10582 / VPI-5482 / E50) protein is Probable dual-specificity RNA methyltransferase RlmN.